The sequence spans 358 residues: Anhydro-N-acetylmuramic acid kinase (358 aa).

9–16 is a binding site for ATP; sequence GTSLDGVD.

This sequence belongs to the anhydro-N-acetylmuramic acid kinase family.

The catalysed reaction is 1,6-anhydro-N-acetyl-beta-muramate + ATP + H2O = N-acetyl-D-muramate 6-phosphate + ADP + H(+). It participates in amino-sugar metabolism; 1,6-anhydro-N-acetylmuramate degradation. It functions in the pathway cell wall biogenesis; peptidoglycan recycling. Functionally, catalyzes the specific phosphorylation of 1,6-anhydro-N-acetylmuramic acid (anhMurNAc) with the simultaneous cleavage of the 1,6-anhydro ring, generating MurNAc-6-P. Is required for the utilization of anhMurNAc either imported from the medium or derived from its own cell wall murein, and thus plays a role in cell wall recycling. In Acidiphilium cryptum (strain JF-5), this protein is Anhydro-N-acetylmuramic acid kinase.